The primary structure comprises 593 residues: Cytochrome c oxidase polypeptide 1 (593 aa).

2 consecutive transmembrane segments (helical) span residues 5-25 and 71-91; these read ASSITLTVLMGVLLVGVVAVL and IGILYGVYGTIAFAWGGVSVL. H117 contributes to the Fe(II)-heme a binding site. Helical transmembrane passes span 122–142, 154–174, 204–224, 246–266, 288–308, and 320–340; these read LFLFGTPMIAAFGNYFIPLLI, AIAFWLLPPGAILIWSGFLIP, GLHLTGVSATMGAINFIATIF, QSGLILFAFPLFGSALIMLLL, LFWFFGHPEVYVLVLPPMGIV, and LFGFKFVVYSTLAIGVLSFGV. 2 residues coordinate Cu cation: H294 and Y298. The segment at residues 294-298 is a cross-link (1'-histidyl-3'-tyrosine (His-Tyr)); that stretch reads HPEVY. Cu cation contacts are provided by H343 and H344. 5 helical membrane-spanning segments follow: residues 358-378, 401-421, 425-445, 467-487, and 506-526; these read FMAVSLAISIPSAVKVFNWIT, FIIGGVTGVFLAVIPIDLILH, YVVGHFHFIVYGAIGFALFAA, FWTALVGSNATFLAMLWLGYG, and LATVGAFLIGVSTLIWLFNMA. H429 lines the heme a3 pocket. H431 lines the Fe(II)-heme a pocket. Residues 562–593 are disordered; the sequence is TTVLPDGGDEAQSEADAVTDGGQPAADSDTES.

Belongs to the heme-copper respiratory oxidase family.

The protein resides in the cell membrane. The enzyme catalyses 4 Fe(II)-[cytochrome c] + O2 + 8 H(+)(in) = 4 Fe(III)-[cytochrome c] + 2 H2O + 4 H(+)(out). The protein operates within energy metabolism; oxidative phosphorylation. In terms of biological role, cytochrome c oxidase is the component of the respiratory chain that catalyzes the reduction of oxygen to water. Subunits 1-3 form the functional core of the enzyme complex. CO I is the catalytic subunit of the enzyme. Electrons originating in cytochrome c are transferred via the copper A center of subunit 2 and heme A of subunit 1 to the bimetallic center formed by heme A3 and copper B. The protein is Cytochrome c oxidase polypeptide 1 (coxA2) of Halobacterium salinarum (strain ATCC 700922 / JCM 11081 / NRC-1) (Halobacterium halobium).